Reading from the N-terminus, the 713-residue chain is Polyribonucleotide nucleotidyltransferase (713 aa).

Mg(2+) contacts are provided by D494 and D500. A KH domain is found at 561 to 623 (PSFSTMTIPK…EAVQSAEKRV (63 aa)). One can recognise an S1 motif domain in the interval 633–702 (GDVYQGTVKS…KSGKYKLSRK (70 aa)).

Belongs to the polyribonucleotide nucleotidyltransferase family. Requires Mg(2+) as cofactor.

The protein resides in the cytoplasm. It carries out the reaction RNA(n+1) + phosphate = RNA(n) + a ribonucleoside 5'-diphosphate. Functionally, involved in mRNA degradation. Catalyzes the phosphorolysis of single-stranded polyribonucleotides processively in the 3'- to 5'-direction. This Amoebophilus asiaticus (strain 5a2) protein is Polyribonucleotide nucleotidyltransferase.